A 363-amino-acid polypeptide reads, in one-letter code: Histidinol-phosphate aminotransferase (363 aa).

The residue at position 218 (Lys-218) is an N6-(pyridoxal phosphate)lysine.

The protein belongs to the class-II pyridoxal-phosphate-dependent aminotransferase family. Histidinol-phosphate aminotransferase subfamily. As to quaternary structure, homodimer. Requires pyridoxal 5'-phosphate as cofactor.

It carries out the reaction L-histidinol phosphate + 2-oxoglutarate = 3-(imidazol-4-yl)-2-oxopropyl phosphate + L-glutamate. It functions in the pathway amino-acid biosynthesis; L-histidine biosynthesis; L-histidine from 5-phospho-alpha-D-ribose 1-diphosphate: step 7/9. This chain is Histidinol-phosphate aminotransferase, found in Xanthomonas oryzae pv. oryzae (strain MAFF 311018).